The primary structure comprises 22 residues: Brevinin-1OKd (22 aa).

Lys22 is subject to Lysine amide.

As to expression, expressed by the skin glands.

Its subcellular location is the secreted. Its function is as follows. Antimicrobial peptide. In Nidirana okinavana (Kampira Falls frog), this protein is Brevinin-1OKd.